A 66-amino-acid chain; its full sequence is Pteroicidin-alpha (66 aa).

A signal peptide spans 1–22 (MKCIALFLVLSMVVLMAEPGEA). An Arginine amide; partial modification is found at Arg-43. The propeptide occupies 44–66 (GKNRDMAEQQELERAFDRERAFA).

This sequence belongs to the pleurocidin family. Post-translationally, this peptide exists in N-terminally amidated and non-amidated forms. The amidated form is more active and has a greater alpha-helix content than the non-amidated form. As to expression, expressed in gill, skin, intestine, spleen, anterior kidney, and blood cells.

The protein localises to the secreted. Its function is as follows. The amidated peptide is bactericidal on human pathogens like S.aureus or E.coli, as well as on the fish pathogen A.salmonicida. May also be active against a variety of fungi. It can kill bacteria in less than 30 minutes (S.aureus) and 120 minutes (V.vulnificus). It induces hemolysis of erythrocytes from human and fishes (sea bass and lesser-spotted dogfish). The non-amidated peptide only inhibits growth of human pathogens like S.aureus or E.coli, and the fish pathogen A.salmonicida. Induces hemolysis of erythrocytes from human and fishes (sea bass and lesser-spotted dogfish). This Pterois volitans (Red lionfish) protein is Pteroicidin-alpha.